We begin with the raw amino-acid sequence, 208 residues long: Uracil phosphoribosyltransferase (208 aa).

Residues arginine 77, arginine 102, and 128–136 (DPMLATGGT) each bind 5-phospho-alpha-D-ribose 1-diphosphate. Uracil-binding positions include isoleucine 191 and 196 to 198 (GDI). Aspartate 197 is a binding site for 5-phospho-alpha-D-ribose 1-diphosphate.

This sequence belongs to the UPRTase family. Mg(2+) serves as cofactor.

It carries out the reaction UMP + diphosphate = 5-phospho-alpha-D-ribose 1-diphosphate + uracil. It functions in the pathway pyrimidine metabolism; UMP biosynthesis via salvage pathway; UMP from uracil: step 1/1. Its activity is regulated as follows. Allosterically activated by GTP. In terms of biological role, catalyzes the conversion of uracil and 5-phospho-alpha-D-ribose 1-diphosphate (PRPP) to UMP and diphosphate. The sequence is that of Uracil phosphoribosyltransferase from Aquifex aeolicus (strain VF5).